The chain runs to 144 residues: Large ribosomal subunit protein uL15 (144 aa).

The interval 1–57 (MLLNTLSPAAGSKHAPKRLGRGVGSGLGKTGGRGHKGQKSRSGGKVRPGFEGGQMPL) is disordered. Positions 21-31 (RGVGSGLGKTG) are enriched in gly residues. Over residues 32 to 44 (GRGHKGQKSRSGG) the composition is skewed to basic residues.

Belongs to the universal ribosomal protein uL15 family. As to quaternary structure, part of the 50S ribosomal subunit.

Its function is as follows. Binds to the 23S rRNA. The protein is Large ribosomal subunit protein uL15 of Vibrio cholerae serotype O1 (strain ATCC 39315 / El Tor Inaba N16961).